The primary structure comprises 311 residues: Methionyl-tRNA formyltransferase (311 aa).

A (6S)-5,6,7,8-tetrahydrofolate-binding site is contributed by 109–112; the sequence is SLLP.

The protein belongs to the Fmt family.

The enzyme catalyses L-methionyl-tRNA(fMet) + (6R)-10-formyltetrahydrofolate = N-formyl-L-methionyl-tRNA(fMet) + (6S)-5,6,7,8-tetrahydrofolate + H(+). Functionally, attaches a formyl group to the free amino group of methionyl-tRNA(fMet). The formyl group appears to play a dual role in the initiator identity of N-formylmethionyl-tRNA by promoting its recognition by IF2 and preventing the misappropriation of this tRNA by the elongation apparatus. The chain is Methionyl-tRNA formyltransferase from Staphylococcus aureus (strain USA300).